The following is a 478-amino-acid chain: MYPTLNLAVCLKSSHLISSHRFCLKNSQSTEKHQKEINISVKERYTCNPSHRQKKNGWVREKNALREPLTASLKFTIHLNSIVFRYIPLYAIIMVGNPVLRPVDMKMQPAPYQDRVRVVQKIYTQLKRFQSSSPHIIKASTIWEHEVAKIAKTRQSYAFNASILLRDIVKYKGNLDKTGKPKNNSSSLIQRSHVLQKLRSLLLDEETLSRNGFFVKMYDTDPINESESDYVECYRCETKFDVTKIMEPTVCRYHLQRKVYNRETKKREFPCCGASLESYSDISAGCMKAKNHVYKWENFTKLSSVVPFKSLVDIKGEENVLALDCEMAFTSKGYEMIRITIVDFWSSEVVYDKVIKPLGEIIDLNSKFSGIHHIDDTAPTIHEAEKCYICPSMINQNSILIGHGLDNDLRVMRIVHDKVIDTAVLYPAGKYKSSLKNLSFEILSRRIQGGEHDSSEDAIAAMDVIKKKLSIPLDKKSW.

An Exonuclease domain is found at 320 to 465 (VLALDCEMAF…EDAIAAMDVI (146 aa)).

It belongs to the REXO1/REXO3 family.

Its subcellular location is the cytoplasm. It localises to the nucleus. Functionally, 3' to 5' exoribonuclease required for proper 3' end maturation of MRP RNA and of the U5L snRNA. The polypeptide is RNA exonuclease 3 (REX3) (Kluyveromyces lactis (strain ATCC 8585 / CBS 2359 / DSM 70799 / NBRC 1267 / NRRL Y-1140 / WM37) (Yeast)).